A 1151-amino-acid polypeptide reads, in one-letter code: Nardilysin (1151 aa).

An N-terminal signal peptide occupies residues 1 to 20 (MLRRVTVAAVCATRRKLCEA). Disordered stretches follow at residues 53–108 (RNKA…KSPS) and 133–207 (MEGK…KKTT). Serine 86, serine 94, and serine 96 each carry phosphoserine. Residues 141 to 198 (TDDEEEEEVEEEEEDDDEDSGAEIEDDDEEGFDDEDEFDDEHDDDLDTEDNELEELEE) show a composition bias toward acidic residues. Histidine 233 provides a ligand contact to Zn(2+). Residue glutamate 236 is the Proton acceptor of the active site. Zn(2+)-binding residues include histidine 237 and glutamate 314.

It belongs to the peptidase M16 family. Interacts with BACE1 and NRG1. Requires Zn(2+) as cofactor. As to expression, primarily in adult heart, skeletal muscle, and testis and at much lower levels in other tissues.

Its subcellular location is the mitochondrion. The protein resides in the cell projection. The protein localises to the dendrite. It catalyses the reaction Hydrolysis of polypeptides, preferably at -Xaa-|-Arg-Lys-, and less commonly at -Arg-|-Arg-Xaa-, in which Xaa is not Arg or Lys.. Cleaves peptide substrates on the N-terminus of arginine residues in dibasic pairs. Is a critical activator of BACE1- and ADAM17-mediated pro-neuregulin ectodomain shedding, involved in the positive regulation of axonal maturation and myelination. Required for proper functioning of 2-oxoglutarate dehydrogenase (OGDH). The polypeptide is Nardilysin (Homo sapiens (Human)).